The chain runs to 397 residues: Tryptophan synthase beta chain (397 aa).

K91 bears the N6-(pyridoxal phosphate)lysine mark.

It belongs to the TrpB family. Tetramer of two alpha and two beta chains. The cofactor is pyridoxal 5'-phosphate.

It catalyses the reaction (1S,2R)-1-C-(indol-3-yl)glycerol 3-phosphate + L-serine = D-glyceraldehyde 3-phosphate + L-tryptophan + H2O. It functions in the pathway amino-acid biosynthesis; L-tryptophan biosynthesis; L-tryptophan from chorismate: step 5/5. The beta subunit is responsible for the synthesis of L-tryptophan from indole and L-serine. The chain is Tryptophan synthase beta chain from Bacillus cereus (strain ZK / E33L).